A 4625-amino-acid chain; its full sequence is Dynein-1-alpha heavy chain, flagellar inner arm I1 complex (4625 aa).

A stem region spans residues 1 to 1919 (MDRRLEWVKE…LIRQCTGLFK (1919 aa)). Residues 70–84 (EQAPEAEDGEGEEHD) are compositionally biased toward acidic residues. A disordered region spans residues 70-163 (EQAPEAEDGE…DEPPAPPAPK (94 aa)). Residues 111-140 (EDAPAAAAEANGANPEDEAAAPADGAADGA) show a composition bias toward low complexity. A compositionally biased stretch (acidic residues) spans 144 to 155 (GGEEGDGAEGDE). Residue 960–967 (AGTNSGKS) participates in ATP binding. 2 coiled-coil regions span residues 1227–1259 (EELKQVLNTVNTIRGESMVMELRYADLEERYRT) and 1339–1409 (TVEL…AVRQ). AAA regions lie at residues 1920–2141 (YGYE…VLVM), 2201–2437 (DVVE…RRPK), 2550–2800 (EPPA…IYEG), and 2906–3155 (NFYN…LRRY). Residues 1958–1965 (GPAGTGKT), 2242–2249 (GQTGGGKT), 2588–2595 (GESGTAKS), and 2945–2952 (GVGGSGKQ) each bind ATP. 2 coiled-coil regions span residues 3192-3297 (LEKL…IRSY) and 3400-3494 (KRKK…LIGD). Residues 3192-3494 (LEKLIQAAVE…ESRRDRLIGD (303 aa)) form a stalk region. AAA regions lie at residues 3542–3773 (LTSD…EIAE) and 3998–4216 (ITRF…LIST). 3680–3687 (GPEISGKT) lines the ATP pocket. Residues 3701–3788 (EQLLNVTLRH…KVTAAEIEET (88 aa)) adopt a coiled-coil conformation.

The protein belongs to the dynein heavy chain family. As to quaternary structure, the I1 inner arm complex (also known as the f dynein complex) is a two-headed isoform composed of two heavy chains (1-alpha and 1-beta), three intermediate chains and three light chains. I1 occupies a specific position proximal to the first radial spoke and repeats every 96 nm along the length of the axoneme.

The protein resides in the cell projection. The protein localises to the cilium. It localises to the flagellum. It is found in the cytoplasm. Its subcellular location is the cytoskeleton. The protein resides in the flagellum axoneme. Its function is as follows. Force generating protein of eukaryotic cilia and flagella. Produces force towards the minus ends of microtubules. Dynein has ATPase activity; the force-producing power stroke is thought to occur on release of ADP. Required for assembly of the I1 inner arm complex and its targeting to the appropriate axoneme location. Also required for phototaxis. In Chlamydomonas reinhardtii (Chlamydomonas smithii), this protein is Dynein-1-alpha heavy chain, flagellar inner arm I1 complex (DHC1).